The sequence spans 277 residues: MEMO1 family protein MTH_45 (277 aa).

Belongs to the MEMO1 family.

The sequence is that of MEMO1 family protein MTH_45 from Methanothermobacter thermautotrophicus (strain ATCC 29096 / DSM 1053 / JCM 10044 / NBRC 100330 / Delta H) (Methanobacterium thermoautotrophicum).